Reading from the N-terminus, the 154-residue chain is Egg-lysin (154 aa).

A signal peptide spans methionine 1–serine 18.

As to quaternary structure, monomer. Homodimer. Molecules associate into dimers and then rapidly dissociate again. Interacts (as a monomer) with the egg vitelline layer protein VERL (via VERL repeats); each VERL chain can bind multiple copies of lysin. In terms of tissue distribution, sperm (at protein level).

The protein resides in the cytoplasmic vesicle. The protein localises to the secretory vesicle. It localises to the acrosome lumen. In terms of biological role, creates a 3 um hole in the egg vitelline layer through which the sperm passes. Does not have enzyme activity. Species-specific interaction between the sperm protein lysin and the egg protein VERL exposes a basic surface on lysin that may dissociate the egg vitelline layer via electrostatic repulsion. Plays a role in ensuring species-specific fertilization. This chain is Egg-lysin, found in Haliotis rufescens (California red abalone).